The chain runs to 316 residues: L-lactate dehydrogenase (316 aa).

Residues Val15, Asp36, Arg41, Tyr66, and 80–81 contribute to the NAD(+) site; that span reads GA. Substrate contacts are provided by residues Gln83, Arg90, and 122-125; that span reads NPVD. NAD(+) contacts are provided by residues 120–122 and Thr145; that span reads ATN. Residue 150–153 coordinates substrate; sequence DTAR. Beta-D-fructose 1,6-bisphosphate is bound by residues Arg155 and His170. The active-site Proton acceptor is His177. A Phosphotyrosine modification is found at Tyr222. Thr231 is a substrate binding site. Residues 287 to 316 are disordered; the sequence is DPGLSDEEREALRDSARALRDSRADLTVGT. The segment covering 296–310 has biased composition (basic and acidic residues); the sequence is EALRDSARALRDSRA.

Belongs to the LDH/MDH superfamily. LDH family. In terms of assembly, homotetramer.

It localises to the cytoplasm. It carries out the reaction (S)-lactate + NAD(+) = pyruvate + NADH + H(+). It functions in the pathway fermentation; pyruvate fermentation to lactate; (S)-lactate from pyruvate: step 1/1. With respect to regulation, allosterically activated by fructose 1,6-bisphosphate (FBP). In terms of biological role, catalyzes the conversion of lactate to pyruvate. In Salinibacter ruber (strain DSM 13855 / M31), this protein is L-lactate dehydrogenase.